The chain runs to 564 residues: Chaperonin GroEL 2 (564 aa).

ATP is bound by residues 29–32 (TIGP), 86–90 (DGTTT), Gly413, and Asp493. Positions 521 to 541 (DKPEPPAPAGDGGGDPMGGMG) are disordered. A compositionally biased stretch (gly residues) spans 530–541 (GDGGGDPMGGMG).

It belongs to the chaperonin (HSP60) family. Forms a cylinder of 14 subunits composed of two heptameric rings stacked back-to-back. Interacts with the co-chaperonin GroES.

It localises to the cytoplasm. The enzyme catalyses ATP + H2O + a folded polypeptide = ADP + phosphate + an unfolded polypeptide.. Together with its co-chaperonin GroES, plays an essential role in assisting protein folding. The GroEL-GroES system forms a nano-cage that allows encapsulation of the non-native substrate proteins and provides a physical environment optimized to promote and accelerate protein folding. The protein is Chaperonin GroEL 2 of Prochlorococcus marinus (strain MIT 9303).